A 188-amino-acid chain; its full sequence is Methylated-DNA--protein-cysteine methyltransferase (188 aa).

Y120, G121, and R134 together coordinate DNA. C151 acts as the Nucleophile; methyl group acceptor in catalysis. S157 is a binding site for DNA.

This sequence belongs to the MGMT family.

The protein resides in the nucleus. It catalyses the reaction a 6-O-methyl-2'-deoxyguanosine in DNA + L-cysteinyl-[protein] = S-methyl-L-cysteinyl-[protein] + a 2'-deoxyguanosine in DNA. The enzyme catalyses a 4-O-methyl-thymidine in DNA + L-cysteinyl-[protein] = a thymidine in DNA + S-methyl-L-cysteinyl-[protein]. Involved in the cellular defense against the biological effects of O6-methylguanine (O6-MeG) and O4-methylthymine (O4-MeT) in DNA. Repairs the methylated nucleobase in DNA by stoichiometrically transferring the methyl group to a cysteine residue in the enzyme. This is a suicide reaction: the enzyme is irreversibly inactivated. Prefers double-stranded DNA over single-stranded DNA as substrate. In Saccharomyces cerevisiae (strain ATCC 204508 / S288c) (Baker's yeast), this protein is Methylated-DNA--protein-cysteine methyltransferase (MGT1).